The chain runs to 1072 residues: Zn(2)-C6 fungal-type transcription factor FTF2 (1072 aa).

The segment at residues 179-206 is a DNA-binding region (zn(2)-C6 fungal-type); the sequence is CIACRRKKIRCSGEKPACKHCLRSRIPC.

Its subcellular location is the nucleus. Its function is as follows. Zn(2)-C6 fungal-type transcription factor that has a role in conidia production and also in plant colonization. Acts as a negative regulator of the production of macroconidia and is required for full virulence and the positive regulation of SIX effectors. In addition, FTF2 is also involved in the regulation of class II hydrophobins FOXG_02746 and FOXG_02748 likely required for plant colonization. The sequence is that of Zn(2)-C6 fungal-type transcription factor FTF2 from Fusarium oxysporum f. sp. lycopersici (strain 4287 / CBS 123668 / FGSC 9935 / NRRL 34936) (Fusarium vascular wilt of tomato).